Consider the following 402-residue polypeptide: Endo-polygalacturonase (402 aa).

The signal sequence occupies residues 1 to 23 (MEYQSGKRVLSLSLGLIGLFSAS). Asp-249 functions as the Proton donor in the catalytic mechanism. The active site involves His-277.

The protein belongs to the glycosyl hydrolase 28 family. Monomer.

Its subcellular location is the secreted. The catalysed reaction is (1,4-alpha-D-galacturonosyl)n+m + H2O = (1,4-alpha-D-galacturonosyl)n + (1,4-alpha-D-galacturonosyl)m.. Functionally, involved in maceration and soft-rotting of plant tissue. The polypeptide is Endo-polygalacturonase (peh) (Pectobacterium carotovorum subsp. carotovorum (Erwinia carotovora subsp. carotovora)).